Consider the following 169-residue polypeptide: DNA damage-inducible transcript 3 protein (169 aa).

Residues 10 to 18 (FGTLSSWEL) are interaction with TRIB3. The interval 10–26 (FGTLSSWELEAWYEDLQ) is N-terminal. Phosphoserine; by CK2 occurs at positions 14, 15, 30, and 31. Residues 32–139 (DENGGTYVSP…KVAQLAEENE (108 aa)) form a disordered region. Residues 74–89 (TSTSQSPHSPDSSQSS) are compositionally biased toward low complexity. Ser-79 and Ser-82 each carry phosphoserine; by MAPK14. The region spanning 99-162 (QGRTRKRKQS…EATRRALIDR (64 aa)) is the bZIP domain. The tract at residues 101 to 130 (RTRKRKQSGHSPARAGKQRMKEKEQENERK) is basic motif. A compositionally biased stretch (basic and acidic residues) spans 119-139 (RMKEKEQENERKVAQLAEENE). Residues 134 to 148 (LAEENERLKQEIERL) are leucine-zipper.

Belongs to the bZIP family. Heterodimer. Interacts with TCF7L2/TCF4, EP300/P300, HDAC1, HDAC5 and HDAC6. Interacts with TRIB3 which blocks its association with EP300/P300. Interacts with FOXO3, CEBPB and ATF4. As to quaternary structure, interacts with isoform AltDDIT3 of DDIT3. In terms of processing, ubiquitinated, leading to its degradation by the proteasome. Post-translationally, phosphorylation at serine residues by MAPK14 enhances its transcriptional activation activity while phosphorylation at serine residues by CK2 inhibits its transcriptional activation activity.

Its subcellular location is the cytoplasm. The protein resides in the nucleus. In terms of biological role, multifunctional transcription factor in endoplasmic reticulum (ER) stress response. Plays an essential role in the response to a wide variety of cell stresses and induces cell cycle arrest and apoptosis in response to ER stress. Plays a dual role both as an inhibitor of CCAAT/enhancer-binding protein (C/EBP) function and as an activator of other genes. Acts as a dominant-negative regulator of C/EBP-induced transcription: dimerizes with members of the C/EBP family, impairs their association with C/EBP binding sites in the promoter regions, and inhibits the expression of C/EBP regulated genes. Positively regulates the transcription of TRIB3, IL6, IL8, IL23, TNFRSF10B/DR5, PPP1R15A/GADD34, BBC3/PUMA, BCL2L11/BIM and ERO1L. Negatively regulates; expression of BCL2 and MYOD1, ATF4-dependent transcriptional activation of asparagine synthetase (ASNS), CEBPA-dependent transcriptional activation of hepcidin (HAMP) and CEBPB-mediated expression of peroxisome proliferator-activated receptor gamma (PPARG). Together with ATF4, mediates ER-mediated cell death by promoting expression of genes involved in cellular amino acid metabolic processes, mRNA translation and the unfolded protein response (UPR) in response to ER stress. Inhibits the canonical Wnt signaling pathway by binding to TCF7L2/TCF4, impairing its DNA-binding properties and repressing its transcriptional activity. Plays a regulatory role in the inflammatory response through the induction of caspase-11 (CASP4/CASP11) which induces the activation of caspase-1 (CASP1) and both these caspases increase the activation of pro-IL1B to mature IL1B which is involved in the inflammatory response. Acts as a major regulator of postnatal neovascularization through regulation of endothelial nitric oxide synthase (NOS3)-related signaling. The protein is DNA damage-inducible transcript 3 protein (DDIT3) of Homo sapiens (Human).